Reading from the N-terminus, the 151-residue chain is Ribosome maturation factor RimP (151 aa).

The protein belongs to the RimP family.

The protein resides in the cytoplasm. In terms of biological role, required for maturation of 30S ribosomal subunits. The sequence is that of Ribosome maturation factor RimP from Shewanella frigidimarina (strain NCIMB 400).